The following is a 122-amino-acid chain: Large ribosomal subunit protein uL14c (122 aa).

The protein belongs to the universal ribosomal protein uL14 family. Part of the 50S ribosomal subunit.

It is found in the plastid. It localises to the chloroplast. Its function is as follows. Binds to 23S rRNA. This Coffea arabica (Arabian coffee) protein is Large ribosomal subunit protein uL14c.